The sequence spans 517 residues: MLAYGSDPNAEDLYITMTPSVSTENDTTVWATEEPAAIVWRHPLLAIALFSICLLTVAGNCLVVIAVCTKKYLRNPTGYLIISLAIADLIVGVIVMPMNSLFEIANHTWLFGLMMCDVFHAMDILASTASIWNLCVISLDRYMAGQDPIGYRDKVSKRRILMAILSVWVLSAILSFPGIIWWRTSSPHLYEDQSQCLFTDSKMYVSFSSLVSFYIPLFLILFAYGKVYIIATRHSKGMRMGIKTVSIKKRNGKKSNTETESILSSENEPTLRIHFGRGKQSSSSLRNSRFHARESTRLLLKQVSCKSLNDRGEHNNNNTVRQPLLRGTEGCHSDSISRSSQRNFRGRNVTIGSNCSSTLLQVDQPDRMSLSSNSQMVMTSPLSTRRKLNVREKSRQMMRYVHEQRAARTLSIVVGAFILCWTPFFVFTPLTAFCESCFSNKETIFTFVTWAGHLNSMLNPLIYSRFSRDFRRAFKQILTCQRQQKVKTAFKTPLSLVFTQLISVTQMWEQPPNTSIE.

Residues 1-46 (MLAYGSDPNAEDLYITMTPSVSTENDTTVWATEEPAAIVWRHPLLA) lie on the Extracellular side of the membrane. The N-linked (GlcNAc...) asparagine glycan is linked to asparagine 25. A helical membrane pass occupies residues 47 to 67 (IALFSICLLTVAGNCLVVIAV). Residues 68 to 77 (CTKKYLRNPT) lie on the Cytoplasmic side of the membrane. The helical transmembrane segment at 78–98 (GYLIISLAIADLIVGVIVMPM) threads the bilayer. The Extracellular portion of the chain corresponds to 99-108 (NSLFEIANHT). An N-linked (GlcNAc...) asparagine glycan is attached at asparagine 106. Residues 109-129 (WLFGLMMCDVFHAMDILASTA) traverse the membrane as a helical segment. Residues 130–159 (SIWNLCVISLDRYMAGQDPIGYRDKVSKRR) are Cytoplasmic-facing. A helical membrane pass occupies residues 160–180 (ILMAILSVWVLSAILSFPGII). Residues 181–209 (WWRTSSPHLYEDQSQCLFTDSKMYVSFSS) lie on the Extracellular side of the membrane. Residues 210–230 (LVSFYIPLFLILFAYGKVYII) traverse the membrane as a helical segment. Over 231-409 (ATRHSKGMRM…YVHEQRAART (179 aa)) the chain is Cytoplasmic. The tract at residues 309 to 339 (NDRGEHNNNNTVRQPLLRGTEGCHSDSISRS) is disordered. The helical transmembrane segment at 410–430 (LSIVVGAFILCWTPFFVFTPL) threads the bilayer. Residues 431–442 (TAFCESCFSNKE) are Extracellular-facing. The chain crosses the membrane as a helical span at residues 443 to 463 (TIFTFVTWAGHLNSMLNPLIY). Residues 464-517 (SRFSRDFRRAFKQILTCQRQQKVKTAFKTPLSLVFTQLISVTQMWEQPPNTSIE) lie on the Cytoplasmic side of the membrane.

Belongs to the G-protein coupled receptor 1 family. As to expression, expressed in pharyngeal neurons I1 and I2, neurons ASG, AVL, CAN, PQR, vulva, intestine, rectal glands and rectal epithelial glands. Also expressed in neurons in ray 8 in males.

The protein resides in the cell membrane. Functionally, receptor for dopamine. The activity of this receptor is mediated by G proteins which activate adenylyl cyclase. In terms of antagonist responses, would be classed with the D1-like dopamine receptor group. The protein is Dopamine receptor 4 (dop-4) of Caenorhabditis elegans.